The primary structure comprises 385 residues: Queuine tRNA-ribosyltransferase (385 aa).

Aspartate 92 serves as the catalytic Proton acceptor. Substrate contacts are provided by residues 92-96, aspartate 146, glutamine 188, and glycine 215; that span reads DSGGF. An RNA binding region spans residues 246 to 252; it reads GVGHPED. The active-site Nucleophile is the aspartate 265. An RNA binding; important for wobble base 34 recognition region spans residues 270 to 274; sequence TRTGR. Zn(2+) is bound by residues cysteine 303, cysteine 305, cysteine 308, and histidine 334.

It belongs to the queuine tRNA-ribosyltransferase family. As to quaternary structure, homodimer. Within each dimer, one monomer is responsible for RNA recognition and catalysis, while the other monomer binds to the replacement base PreQ1. The cofactor is Zn(2+).

The catalysed reaction is 7-aminomethyl-7-carbaguanine + guanosine(34) in tRNA = 7-aminomethyl-7-carbaguanosine(34) in tRNA + guanine. It participates in tRNA modification; tRNA-queuosine biosynthesis. In terms of biological role, catalyzes the base-exchange of a guanine (G) residue with the queuine precursor 7-aminomethyl-7-deazaguanine (PreQ1) at position 34 (anticodon wobble position) in tRNAs with GU(N) anticodons (tRNA-Asp, -Asn, -His and -Tyr). Catalysis occurs through a double-displacement mechanism. The nucleophile active site attacks the C1' of nucleotide 34 to detach the guanine base from the RNA, forming a covalent enzyme-RNA intermediate. The proton acceptor active site deprotonates the incoming PreQ1, allowing a nucleophilic attack on the C1' of the ribose to form the product. After dissociation, two additional enzymatic reactions on the tRNA convert PreQ1 to queuine (Q), resulting in the hypermodified nucleoside queuosine (7-(((4,5-cis-dihydroxy-2-cyclopenten-1-yl)amino)methyl)-7-deazaguanosine). In Thermus thermophilus (strain ATCC BAA-163 / DSM 7039 / HB27), this protein is Queuine tRNA-ribosyltransferase.